A 55-amino-acid chain; its full sequence is MSTTAKIDFETGLFDEGQYEEAPDLPAIQPKRRTSRAPFIVAGGLLLGVVSENGN.

This is an uncharacterized protein from Acidithiobacillus ferrooxidans (Thiobacillus ferrooxidans).